The primary structure comprises 860 residues: DNA gyrase subunit A (860 aa).

The Topo IIA-type catalytic domain maps to L34–L503. Y122 acts as the O-(5'-phospho-DNA)-tyrosine intermediate in catalysis. A GyrA-box motif is present at residues Q530–G536.

This sequence belongs to the type II topoisomerase GyrA/ParC subunit family. In terms of assembly, heterotetramer, composed of two GyrA and two GyrB chains. In the heterotetramer, GyrA contains the active site tyrosine that forms a transient covalent intermediate with DNA, while GyrB binds cofactors and catalyzes ATP hydrolysis.

Its subcellular location is the cytoplasm. The catalysed reaction is ATP-dependent breakage, passage and rejoining of double-stranded DNA.. Functionally, a type II topoisomerase that negatively supercoils closed circular double-stranded (ds) DNA in an ATP-dependent manner to modulate DNA topology and maintain chromosomes in an underwound state. Negative supercoiling favors strand separation, and DNA replication, transcription, recombination and repair, all of which involve strand separation. Also able to catalyze the interconversion of other topological isomers of dsDNA rings, including catenanes and knotted rings. Type II topoisomerases break and join 2 DNA strands simultaneously in an ATP-dependent manner. The protein is DNA gyrase subunit A of Synechocystis sp. (strain ATCC 27184 / PCC 6803 / Kazusa).